Consider the following 217-residue polypeptide: Protein-L-isoaspartate O-methyltransferase 2 (217 aa).

Ser62 is an active-site residue.

It belongs to the methyltransferase superfamily. L-isoaspartyl/D-aspartyl protein methyltransferase family.

The protein localises to the cytoplasm. It catalyses the reaction [protein]-L-isoaspartate + S-adenosyl-L-methionine = [protein]-L-isoaspartate alpha-methyl ester + S-adenosyl-L-homocysteine. In terms of biological role, catalyzes the methyl esterification of L-isoaspartyl residues in peptides and proteins that result from spontaneous decomposition of normal L-aspartyl and L-asparaginyl residues. It plays a role in the repair and/or degradation of damaged proteins. This is Protein-L-isoaspartate O-methyltransferase 2 from Geotalea uraniireducens (strain Rf4) (Geobacter uraniireducens).